The primary structure comprises 147 residues: uncharacterized protein (147 aa).

This is an uncharacterized protein from Archaeoglobus fulgidus (strain ATCC 49558 / DSM 4304 / JCM 9628 / NBRC 100126 / VC-16).